The sequence spans 653 residues: tRNA 5-methylaminomethyl-2-thiouridine biosynthesis bifunctional protein MnmC (653 aa).

A tRNA (mnm(5)s(2)U34)-methyltransferase region spans residues 1–236 (MPDRLVPATL…KFAMLVGEYA (236 aa)). The tract at residues 260–653 (IGAGLAGCAL…IRALRGRKLG (394 aa)) is FAD-dependent cmnm(5)s(2)U34 oxidoreductase.

This sequence in the N-terminal section; belongs to the methyltransferase superfamily. tRNA (mnm(5)s(2)U34)-methyltransferase family. In the C-terminal section; belongs to the DAO family. Requires FAD as cofactor.

The protein localises to the cytoplasm. It carries out the reaction 5-aminomethyl-2-thiouridine(34) in tRNA + S-adenosyl-L-methionine = 5-methylaminomethyl-2-thiouridine(34) in tRNA + S-adenosyl-L-homocysteine + H(+). Its function is as follows. Catalyzes the last two steps in the biosynthesis of 5-methylaminomethyl-2-thiouridine (mnm(5)s(2)U) at the wobble position (U34) in tRNA. Catalyzes the FAD-dependent demodification of cmnm(5)s(2)U34 to nm(5)s(2)U34, followed by the transfer of a methyl group from S-adenosyl-L-methionine to nm(5)s(2)U34, to form mnm(5)s(2)U34. This is tRNA 5-methylaminomethyl-2-thiouridine biosynthesis bifunctional protein MnmC from Burkholderia vietnamiensis (strain G4 / LMG 22486) (Burkholderia cepacia (strain R1808)).